The sequence spans 254 residues: Protein orai-2 (254 aa).

4 helical membrane-spanning segments follow: residues 66-83 (TSAL…EVQL), 94-114 (LIAF…ALLI), 148-168 (LAWG…VVLL), and 196-216 (AALV…VFTI).

Belongs to the Orai family. As to quaternary structure, oligomerizes in homomeric and heteromeric ORAI complexes. Native CRAC channels most likely consist of hexameric ORAI heteromers, implying that diverse ORAI1, ORAI2 and ORAI3 subunit combinations with distinct biophysical properties can operate in a cell-type specific way. Interacts with STIM1; this regulates channel activity. Interacts with CRACR2A/EFCAB4B.

It localises to the cell membrane. The enzyme catalyses Ca(2+)(in) = Ca(2+)(out). With respect to regulation, CRAC channels are regulated by fast Ca(2+)-dependent inactivation (FCDI), a mechanism that limits Ca(2+) influx and cell toxicity. ORAI2 channels display prominent FCDI. Inhibited by lanthanides such as Gd(3+) ions. Its function is as follows. Pore-forming subunit of inward rectifying Ca(2+) release-activated Ca(2+) (CRAC) channels. Assembles with ORAI1 and ORAI3 to form hexameric CRAC channels that mediate Ca(2+) influx upon depletion of endoplasmic reticulum Ca(2+) store and channel activation by Ca(2+) sensor STIM1, a process known as store-operated Ca(2+) entry (SOCE). Various pore subunit combinations may account for distinct CRAC channel spatiotemporal and cell-type specific dynamics. ORAI1 mainly contributes to the generation of Ca(2+) plateaus involved in sustained Ca(2+) entry and is dispensable for cytosolic Ca(2+) oscillations, whereas ORAI2 and ORAI3 generate oscillatory patterns. CRAC channels assemble in Ca(2+) signaling microdomains where Ca(2+) influx is coupled to calmodulin and calcineurin signaling and activation of NFAT transcription factors recruited to ORAI1 via AKAP5. CRAC channels are the main pathway for Ca(2+) influx in T cells and promote the immune response to pathogens by activating NFAT-dependent cytokine and chemokine transcription. This is Protein orai-2 (ORAI2) from Homo sapiens (Human).